A 360-amino-acid polypeptide reads, in one-letter code: Photosystem II protein D1 2 (360 aa).

At 1–31 the chain is on the cytoplasmic side; that stretch reads MTTTLQQRESASLWEQFCQWVTSTNNRIYVG. A helical transmembrane segment spans residues 32-53; the sequence is WFGTLMIPTLLTATTCFIIAFI. The Lumenal, thylakoid portion of the chain corresponds to 54 to 110; it reads AAPPVDIDGIREPVAGSLLYGNNIISGAVVPSSNAIGLHFYPIWEAASLDEWLYNGG. Residues 111–134 traverse the membrane as a helical segment; that stretch reads PYQLVVFHFLIGIFCYMGRQWELS. His-118 contacts chlorophyll a. Tyr-126 provides a ligand contact to pheophytin a. The Cytoplasmic portion of the chain corresponds to 135–142; it reads YRLGMRPW. Residues 143–161 traverse the membrane as a helical segment; sequence ICVAYSAPVSAATAVFLIY. Residue Tyr-147 participates in pheophytin a binding. Topologically, residues 162–191 are lumenal, thylakoid; sequence PIGQGSFSDGMPLGISGTFNFMIVFQAEHN. The [CaMn4O5] cluster site is built by Asp-170 and Glu-189. Residues 192–218 traverse the membrane as a helical segment; the sequence is ILMHPFHMLGVAGVFGGSLFSAMHGSL. Residue His-198 coordinates chlorophyll a. A quinone contacts are provided by His-215, Ser-264, and Phe-265. His-215 lines the Fe cation pocket. The Cytoplasmic segment spans residues 219-270; sequence VTSSLVRETTEVESQNYGYKFGQEEETYNIVAAHGYFGRLIFQYASFNNSRS. The chain crosses the membrane as a helical span at residues 271–295; the sequence is LHFFLGAWPVIGIWFTAMGVSTMAF. Fe cation is bound at residue His-272. Residues 296-360 lie on the Lumenal, thylakoid side of the membrane; it reads NLNGFNFNQS…VALTAPAVNG (65 aa). [CaMn4O5] cluster is bound by residues His-332, Glu-333, His-337, Asp-342, and Ala-344. Positions 345–360 are excised as a propeptide; it reads SGEQAPVALTAPAVNG.

Belongs to the reaction center PufL/M/PsbA/D family. In terms of assembly, PSII is composed of 1 copy each of membrane proteins PsbA, PsbB, PsbC, PsbD, PsbE, PsbF, PsbH, PsbI, PsbJ, PsbK, PsbL, PsbM, PsbT, PsbX, PsbY, PsbZ, Psb30/Ycf12, peripheral proteins PsbO, CyanoQ (PsbQ), PsbU, PsbV and a large number of cofactors. It forms dimeric complexes. The D1/D2 heterodimer binds P680, chlorophylls that are the primary electron donor of PSII, and subsequent electron acceptors. It shares a non-heme iron and each subunit binds pheophytin, quinone, additional chlorophylls, carotenoids and lipids. D1 provides most of the ligands for the Mn4-Ca-O5 cluster of the oxygen-evolving complex (OEC). There is also a Cl(-1) ion associated with D1 and D2, which is required for oxygen evolution. The PSII complex binds additional chlorophylls, carotenoids and specific lipids. is required as a cofactor. Post-translationally, C-terminally processed by CtpA; processing is essential to allow assembly of the oxygen-evolving complex and photosynthetic growth. In terms of processing, tyr-161 forms a radical intermediate that is referred to as redox-active TyrZ, YZ or Y-Z.

The protein resides in the cellular thylakoid membrane. The enzyme catalyses 2 a plastoquinone + 4 hnu + 2 H2O = 2 a plastoquinol + O2. Its function is as follows. Photosystem II (PSII) is a light-driven water:plastoquinone oxidoreductase that uses light energy to abstract electrons from H(2)O, generating O(2) and a proton gradient subsequently used for ATP formation. It consists of a core antenna complex that captures photons, and an electron transfer chain that converts photonic excitation into a charge separation. The D1/D2 (PsbA/PsbD) reaction center heterodimer binds P680, the primary electron donor of PSII as well as several subsequent electron acceptors. The protein is Photosystem II protein D1 2 of Synechocystis sp. (strain ATCC 27184 / PCC 6803 / Kazusa).